We begin with the raw amino-acid sequence, 439 residues long: ATP-dependent RNA helicase RhlB (439 aa).

The short motif at 9–37 (QKFADLPLCDEVKQALNENGFEHCTPIQA) is the Q motif element. Residues 40–219 (LPVLLEKKDI…YDHMNDPVKV (180 aa)) form the Helicase ATP-binding domain. Residue 53 to 60 (AQTGTGKT) coordinates ATP. Residues 165–168 (DEAD) carry the DEAD box motif. Residues 243–390 (KLKLLHSLIE…VTSYDRDALI (148 aa)) form the Helicase C-terminal domain. Residues 394–439 (PPVKIHRKPHAGGRNLRDRNGSPRPSGSHRSGSGRPPRHDRTRRHS) form a disordered region. Residues 415-428 (SPRPSGSHRSGSGR) show a composition bias toward low complexity. Residues 429–439 (PPRHDRTRRHS) show a composition bias toward basic residues.

The protein belongs to the DEAD box helicase family. RhlB subfamily. In terms of assembly, component of the RNA degradosome, which is a multiprotein complex involved in RNA processing and mRNA degradation.

It localises to the cytoplasm. The catalysed reaction is ATP + H2O = ADP + phosphate + H(+). Its function is as follows. DEAD-box RNA helicase involved in RNA degradation. Has RNA-dependent ATPase activity and unwinds double-stranded RNA. The polypeptide is ATP-dependent RNA helicase RhlB (Shewanella amazonensis (strain ATCC BAA-1098 / SB2B)).